The sequence spans 440 residues: MDRWQGIQHVVVVGLGITGLSVVNYLRKYHPSVTVQVIDTREAPPGQEQLSSDVALHRSGWNLEWLLNADLVVTNPGIALATPEIQQVLAAGIPVVGDIELFAWHVDTPVIAITGSNGKSTVTDLSGVLANAAGVKAAVGGNIGVPALDLISPDVELYVLELSSFQLETTSSLKLKAAAFLNLSEDHMDRYQGMEDYRQAKLRIFDHAETAVVNADDTQTFPDHAAHLQVVTFGVEQAAQFSLAQHQGREYLFARDEAVMACAELSLVGRHNVANVLTVLALLDSAGVNFRLALDALKSYTGLTHRCQVVADNHGIKWVNDSKATNVASTLAALSGLKIEGQLYLLVGGVGKGADFTPLAPVLATLPVQLCCFGVDGHQFMPLHPSARFYDSMESIIRSIRPQLKSGDMVLLSPACASFDQFKNFMARGDIFAQLARQYA.

115-121 is a binding site for ATP; the sequence is GSNGKST.

It belongs to the MurCDEF family.

The protein resides in the cytoplasm. The enzyme catalyses UDP-N-acetyl-alpha-D-muramoyl-L-alanine + D-glutamate + ATP = UDP-N-acetyl-alpha-D-muramoyl-L-alanyl-D-glutamate + ADP + phosphate + H(+). The protein operates within cell wall biogenesis; peptidoglycan biosynthesis. In terms of biological role, cell wall formation. Catalyzes the addition of glutamate to the nucleotide precursor UDP-N-acetylmuramoyl-L-alanine (UMA). This chain is UDP-N-acetylmuramoylalanine--D-glutamate ligase, found in Vibrio cholerae serotype O1 (strain ATCC 39315 / El Tor Inaba N16961).